We begin with the raw amino-acid sequence, 98 residues long: NADH-ubiquinone oxidoreductase chain 4L (98 aa).

3 helical membrane passes run 1–21, 29–49, and 61–81; these read MSMVYINIFLAFIMSLMGLLM, SLLCLEGMMLSLFIMMAVAIL, and IILLVFAACEAALGLSLLVMV.

The protein belongs to the complex I subunit 4L family. As to quaternary structure, core subunit of respiratory chain NADH dehydrogenase (Complex I) which is composed of 45 different subunits.

It is found in the mitochondrion inner membrane. The enzyme catalyses a ubiquinone + NADH + 5 H(+)(in) = a ubiquinol + NAD(+) + 4 H(+)(out). Functionally, core subunit of the mitochondrial membrane respiratory chain NADH dehydrogenase (Complex I) which catalyzes electron transfer from NADH through the respiratory chain, using ubiquinone as an electron acceptor. Part of the enzyme membrane arm which is embedded in the lipid bilayer and involved in proton translocation. The sequence is that of NADH-ubiquinone oxidoreductase chain 4L (MT-ND4L) from Felis catus (Cat).